We begin with the raw amino-acid sequence, 344 residues long: Dihydroorotase (344 aa).

2 residues coordinate Zn(2+): His-13 and His-15. Substrate is bound by residues His-15–Arg-17 and Asn-41. The Zn(2+) site is built by Lys-98, His-135, and His-173. Lys-98 carries the post-translational modification N6-carboxylysine. His-135 lines the substrate pocket. Leu-218 contributes to the substrate binding site. Asp-247 is a Zn(2+) binding site. Asp-247 is an active-site residue. Substrate contacts are provided by His-251 and Ala-263.

It belongs to the metallo-dependent hydrolases superfamily. DHOase family. Class II DHOase subfamily. As to quaternary structure, homodimer. The cofactor is Zn(2+).

The enzyme catalyses (S)-dihydroorotate + H2O = N-carbamoyl-L-aspartate + H(+). It functions in the pathway pyrimidine metabolism; UMP biosynthesis via de novo pathway; (S)-dihydroorotate from bicarbonate: step 3/3. In terms of biological role, catalyzes the reversible cyclization of carbamoyl aspartate to dihydroorotate. The polypeptide is Dihydroorotase (Neisseria gonorrhoeae (strain NCCP11945)).